A 567-amino-acid chain; its full sequence is Monodechloroaminopyrrolnitrin halogenase PrnC (567 aa).

It participates in antibiotic biosynthesis. Functionally, involved in the biosynthesis of the antifungal antibiotic pyrrolnitrin. Catalyzes the chlorination of monodechloroaminopyrrolnitrin (MDA) at the 3 position to form aminopyrrolnitrin (APRN). In Pseudomonas fluorescens, this protein is Monodechloroaminopyrrolnitrin halogenase PrnC (prnC).